A 412-amino-acid chain; its full sequence is Serine hydroxymethyltransferase (412 aa).

(6S)-5,6,7,8-tetrahydrofolate is bound by residues Leu-125 and 129–131 (GHL). Lys-234 is modified (N6-(pyridoxal phosphate)lysine). Glu-250 contacts (6S)-5,6,7,8-tetrahydrofolate.

It belongs to the SHMT family. In terms of assembly, homodimer. Pyridoxal 5'-phosphate is required as a cofactor.

The protein resides in the cytoplasm. It catalyses the reaction (6R)-5,10-methylene-5,6,7,8-tetrahydrofolate + glycine + H2O = (6S)-5,6,7,8-tetrahydrofolate + L-serine. The protein operates within one-carbon metabolism; tetrahydrofolate interconversion. It functions in the pathway amino-acid biosynthesis; glycine biosynthesis; glycine from L-serine: step 1/1. Catalyzes the reversible interconversion of serine and glycine with tetrahydrofolate (THF) serving as the one-carbon carrier. This reaction serves as the major source of one-carbon groups required for the biosynthesis of purines, thymidylate, methionine, and other important biomolecules. Also exhibits THF-independent aldolase activity toward beta-hydroxyamino acids, producing glycine and aldehydes, via a retro-aldol mechanism. The chain is Serine hydroxymethyltransferase from Deinococcus geothermalis (strain DSM 11300 / CIP 105573 / AG-3a).